A 302-amino-acid chain; its full sequence is Glutaminase (302 aa).

Substrate contacts are provided by Ser61, Asn111, Glu155, Asn162, Tyr186, Tyr238, and Val256.

Belongs to the glutaminase family. Homotetramer.

The enzyme catalyses L-glutamine + H2O = L-glutamate + NH4(+). This is Glutaminase from Stutzerimonas stutzeri (strain A1501) (Pseudomonas stutzeri).